An 873-amino-acid chain; its full sequence is Calmodulin-dependent glutamylase SidJ (873 aa).

Residues 16–90 are disordered; it reads QSEDNPSETA…TTSTTKQKGP (75 aa). The segment covering 22–58 has biased composition (polar residues); it reads SETAVETTDVSTKIKTTDTTQEESSVKTKTVVPTQPG. 2 residues coordinate Mg(2+): Asp542 and Asp545. Residues 851-873 are disordered; it reads NLSEKSDIDSEKPESERTTDKRL.

In terms of assembly, interacts with host calmodulin/CALM1; this interaction is required for glutamylase activity. Mg(2+) serves as cofactor.

The enzyme catalyses L-glutamyl-[protein] + L-glutamate + ATP = gamma-L-glutamyl-L-glutamyl-[protein] + ADP + phosphate + H(+). It catalyses the reaction (L-glutamyl)(n)-gamma-L-glutamyl-L-glutamyl-[protein] + L-glutamate + ATP = (L-glutamyl)(n+1)-gamma-L-glutamyl-L-glutamyl-[protein] + ADP + phosphate + H(+). Glytamylation catalyzed by SidJ requires host calmodulin and can be regulated by intracellular changes in Ca2+ concentrations. Also requires ATP. Its function is as follows. Glutamylase that mediates the covalent attachment of glutamate moieties to SdeA on one of the catalytic residues that is required for its mono-ADP-ribosyltransferase activity. In turn, inhibits SdeA ubiquitinating activity. Also glutamylates related SdeB, SdeC and SidE. Glutamylase activity only occurs in the host since it requires host calmodulin. May also reverse the SdeA-mediated substrate ubiquitination by cleaving the phosphodiester bond that links phosphoribosylated ubiquitin to protein substrates via its deubiquitinase activity. In Legionella pneumophila subsp. pneumophila (strain Philadelphia 1 / ATCC 33152 / DSM 7513), this protein is Calmodulin-dependent glutamylase SidJ.